The primary structure comprises 270 residues: Ethanolamine ammonia-lyase small subunit (270 aa).

Adenosylcob(III)alamin-binding residues include valine 166, glutamate 187, and cysteine 216.

This sequence belongs to the EutC family. As to quaternary structure, the basic unit is a heterodimer which dimerizes to form tetramers. The heterotetramers trimerize; 6 large subunits form a core ring with 6 small subunits projecting outwards. It depends on adenosylcob(III)alamin as a cofactor.

It localises to the bacterial microcompartment. It carries out the reaction ethanolamine = acetaldehyde + NH4(+). It functions in the pathway amine and polyamine degradation; ethanolamine degradation. In terms of biological role, catalyzes the deamination of various vicinal amino-alcohols to oxo compounds. Allows this organism to utilize ethanolamine as the sole source of nitrogen and carbon in the presence of external vitamin B12. This chain is Ethanolamine ammonia-lyase small subunit, found in Ralstonia nicotianae (strain ATCC BAA-1114 / GMI1000) (Ralstonia solanacearum).